Here is a 245-residue protein sequence, read N- to C-terminus: tRNA pseudouridine synthase A (245 aa).

The Nucleophile role is filled by D52. Y111 provides a ligand contact to substrate.

It belongs to the tRNA pseudouridine synthase TruA family. As to quaternary structure, homodimer.

The enzyme catalyses uridine(38/39/40) in tRNA = pseudouridine(38/39/40) in tRNA. Formation of pseudouridine at positions 38, 39 and 40 in the anticodon stem and loop of transfer RNAs. This Ehrlichia canis (strain Jake) protein is tRNA pseudouridine synthase A.